The sequence spans 150 residues: Transcription antitermination protein NusB (150 aa).

Belongs to the NusB family.

In terms of biological role, involved in transcription antitermination. Required for transcription of ribosomal RNA (rRNA) genes. Binds specifically to the boxA antiterminator sequence of the ribosomal RNA (rrn) operons. This is Transcription antitermination protein NusB from Saccharophagus degradans (strain 2-40 / ATCC 43961 / DSM 17024).